Consider the following 254-residue polypeptide: Myeloblastin (254 aa).

The N-terminal stretch at 1 to 27 (MSGSYPSPKGIHPFLLLALVVGGAVQA) is a signal peptide. The propeptide occupies 28–29 (SK). The region spanning 30-250 (IVGGHEARPH…YVDWIQNVLR (221 aa)) is the Peptidase S1 domain. A disulfide bridge links Cys-58 with Cys-74. Residues His-73 and Asp-120 each act as charge relay system in the active site. 2 N-linked (GlcNAc...) asparagine glycosylation sites follow: Asn-127 and Asn-176. 3 disulfides stabilise this stretch: Cys-154–Cys-211, Cys-184–Cys-190, and Cys-201–Cys-226. Ser-205 acts as the Charge relay system in catalysis. Positions 251–254 (GAEP) are excised as a propeptide.

It belongs to the peptidase S1 family. Elastase subfamily. May form dimers. Interacts with CD177; the interaction tethers PRTN3 to the cell surface; the interaction is direct. Interacts with SERPINB1. Interacts with ADGRG3.

Its subcellular location is the lysosome. It localises to the secreted. It is found in the cell membrane. The protein resides in the membrane raft. It catalyses the reaction Hydrolysis of proteins, including elastin, by preferential cleavage: -Ala-|-Xaa- &gt; -Val-|-Xaa-.. Serine protease that degrades elastin, fibronectin, laminin, vitronectin, and collagen types I, III, and IV (in vitro). By cleaving and activating receptor F2RL1/PAR-2, enhances endothelial cell barrier function and thus vascular integrity during neutrophil transendothelial migration. May play a role in neutrophil transendothelial migration, probably when associated with CD177. Triggers inflammatory processes in neutrophils by interacting with ADGRG3 upstream of F2RL1/PAR2 activation. The polypeptide is Myeloblastin (Prtn3) (Mus musculus (Mouse)).